A 423-amino-acid polypeptide reads, in one-letter code: Flavohemoprotein B (423 aa).

The region spanning 1 to 136 (MLSQKSIQII…VAQAFMDAEE (136 aa)) is the Globin domain. Position 83 (His83) interacts with heme b. Active-site charge relay system residues include Tyr93 and Glu135. The interval 149–423 (WKDTREFVVD…LRGVKNIIEN (275 aa)) is reductase. The region spanning 150–268 (KDTREFVVDR…SVPAGDFVVN (119 aa)) is the FAD-binding FR-type domain. Residues Tyr188 and 212–215 (RHYS) each bind FAD. 281–286 (GVGINP) is a binding site for NADP(+). 400 to 403 (LFGP) contacts FAD.

It belongs to the globin family. Two-domain flavohemoproteins subfamily. This sequence in the C-terminal section; belongs to the flavoprotein pyridine nucleotide cytochrome reductase family. It depends on FAD as a cofactor. Heme b serves as cofactor.

Its subcellular location is the cytoplasm. The catalysed reaction is 2 nitric oxide + NADPH + 2 O2 = 2 nitrate + NADP(+) + H(+). It carries out the reaction 2 nitric oxide + NADH + 2 O2 = 2 nitrate + NAD(+) + H(+). Its function is as follows. Is involved in NO detoxification in an aerobic process, termed nitric oxide dioxygenase (NOD) reaction that utilizes O(2) and NAD(P)H to convert NO to nitrate, which protects the cell from various noxious nitrogen compounds. Therefore, plays a central role in the inducible response to nitrosative stress. Functionally, in the presence of oxygen and NADH, it has NADH oxidase activity, which leads to the generation of superoxide and H(2)O(2). Under anaerobic conditions, it also exhibits nitric oxide reductase and FAD reductase activities. However, all these reactions are much lower than NOD activity. This chain is Flavohemoprotein B (fhbB), found in Dictyostelium discoideum (Social amoeba).